The primary structure comprises 127 residues: Fumarate reductase subunit C (127 aa).

Helical transmembrane passes span 30–50 (ATVL…GSLV), 67–87 (IVVA…QTFF), and 107–127 (VVVL…LVIV).

Belongs to the FrdC family. As to quaternary structure, part of an enzyme complex containing four subunits: a flavoprotein (FrdA), an iron-sulfur protein (FrdB), and two hydrophobic anchor proteins (FrdC and FrdD).

The protein localises to the cell inner membrane. Functionally, anchors the catalytic components of the fumarate reductase complex to the cell membrane, binds quinones. This is Fumarate reductase subunit C from Aliivibrio fischeri (strain ATCC 700601 / ES114) (Vibrio fischeri).